The sequence spans 249 residues: Chromosome segregation and cytokinesis defective protein 1 (249 aa).

Residues 12 to 48 (VVAMADTLETRVKDLLEEYKKKLREVALQTAKAESDR) adopt a coiled-coil conformation. Disordered regions lie at residues 70 to 89 (PDDF…AAVA), 94 to 183 (LPSE…PEKP), and 208 to 249 (TTAT…GTSV). A compositionally biased stretch (acidic residues) spans 73 to 85 (FYIESGEEEEEGE). Polar residues predominate over residues 109–126 (QKTSIPIGQNSGRNTVQV). A compositionally biased stretch (low complexity) spans 224–236 (SGAASKKAAAAAG).

This sequence belongs to the borealin family. Highly divergent. As to quaternary structure, component of the CPC complex which consists of icp-1; csc-1; bir-1 and air-2. Within the complex interacts with Aurora B/air-2, bir-1 and icp-1.

It localises to the nucleus. The protein resides in the chromosome. It is found in the centromere. The protein localises to the cytoplasm. Its subcellular location is the cytoskeleton. It localises to the spindle. Its function is as follows. Component of the chromosomal passenger complex (CPC), a complex that acts as a key regulator of chromosome segregation and cytokinesis during mitosis. The CPC complex has essential functions at the centromere in ensuring correct chromosome alignment and segregation. In the complex, it may be required to direct the Aurora B/air-2 to centromeric DNA. This is Chromosome segregation and cytokinesis defective protein 1 (csc-1) from Caenorhabditis elegans.